Consider the following 447-residue polypeptide: Ameloblastin (447 aa).

The signal sequence occupies residues 1–26 (MSASKIPLFKMKDLILILCLLEMSFA). Residue P37 is modified to Hydroxyproline. S43 carries the post-translational modification Phosphoserine. Residue S112 is glycosylated (O-linked (GalNAc...) serine). Disordered regions lie at residues 165–211 (QQVA…DFAD), 307–338 (DSPVAATKGPENEEGGAQGSPMPEANPDNLEN), and 353–383 (LLALPKDDIPGLPRSPSGKMKGLPSVTPAAA). 2 repeat units span residues 189–201 (PSLPGMDFPDPQG) and 202–214 (PSLPGLDFADPQG).

This sequence belongs to the ameloblastin family. As to expression, ameloblast-specific. Located at the Tomes processes of secretory ameloblasts and in the sheath space between rod-interrod enamel.

Its subcellular location is the secreted. It localises to the extracellular space. The protein resides in the extracellular matrix. Its function is as follows. Involved in the mineralization and structural organization of enamel. The protein is Ameloblastin (AMBN) of Homo sapiens (Human).